We begin with the raw amino-acid sequence, 525 residues long: Hydroxyneurosporene desaturase (525 aa).

It belongs to the carotenoid/retinoid oxidoreductase family.

It catalyses the reaction rhodopin + A = (3E)-3,4-didehydrorhodopin + AH2. The protein operates within carotenoid biosynthesis; spheroidene biosynthesis. Its function is as follows. Catalyzes the introduction of C-3,4 double bonds into 1-hydroxyneurosporene (1-HO-Neu) to yield demethylspheroidene (DMS). The preferred substrates are 1-hydroxy-neurosporene, 1-hydroxy-lycopene and 1,1-dihydroxyneurosporene, however the 3,4-didehydrolycopene derivatives such as 1,1-dihydroxy-3,4-didehydrolycopene, 1-methoxy-1-hydroxy-3,4-didehydrolycopene and 1-hydroxy-3,4-didehydrolycopene are also efficiently converted. 1-HO-carotene derivatives can be also used. This Rubrivivax gelatinosus (Rhodocyclus gelatinosus) protein is Hydroxyneurosporene desaturase (crtD).